A 389-amino-acid chain; its full sequence is Pyruvylated Gal-beta-1,3-epitope synthesis protein 2 (389 aa).

Residues 1–16 (MTKLWVNFFSQKLLRL) lie on the Cytoplasmic side of the membrane. The chain crosses the membrane as a helical span at residues 17-37 (LIPSIIVVFAFAALFAIYSPI). The Lumenal segment spans residues 38-389 (QLGGINFYKR…WSNSFDLITA (352 aa)).

The protein resides in the endoplasmic reticulum membrane. It is found in the golgi apparatus membrane. In terms of biological role, involved in cell wall biogenesis. Has a role in the addition of Gal-beta1,3 moeities to galactomannans and their subsequent pyruvylation. Has a role in meiosis. The chain is Pyruvylated Gal-beta-1,3-epitope synthesis protein 2 (pvg2) from Schizosaccharomyces pombe (strain 972 / ATCC 24843) (Fission yeast).